The primary structure comprises 576 residues: uncharacterized protein (576 aa).

The span at 241–261 shows a compositional bias: polar residues; sequence DNTKAPSPTNTAGSRELSTPA. Residues 241–270 are disordered; it reads DNTKAPSPTNTAGSRELSTPAGSPGKASLP.

This is an uncharacterized protein from Bacillus subtilis (strain 168).